The sequence spans 186 residues: Elongation factor P (186 aa).

It belongs to the elongation factor P family.

It is found in the cytoplasm. The protein operates within protein biosynthesis; polypeptide chain elongation. Functionally, involved in peptide bond synthesis. Stimulates efficient translation and peptide-bond synthesis on native or reconstituted 70S ribosomes in vitro. Probably functions indirectly by altering the affinity of the ribosome for aminoacyl-tRNA, thus increasing their reactivity as acceptors for peptidyl transferase. The polypeptide is Elongation factor P (Prochlorococcus marinus (strain MIT 9211)).